A 76-amino-acid polypeptide reads, in one-letter code: uncharacterized protein (76 aa).

This is an uncharacterized protein from Enterobacteria phage T4 (Bacteriophage T4).